The following is a 249-amino-acid chain: Probable transcriptional regulatory protein ZMO0153 (249 aa).

Belongs to the TACO1 family.

Its subcellular location is the cytoplasm. The sequence is that of Probable transcriptional regulatory protein ZMO0153 from Zymomonas mobilis subsp. mobilis (strain ATCC 31821 / ZM4 / CP4).